Reading from the N-terminus, the 271-residue chain is Fatty acid elongase 2 (271 aa).

A helical membrane pass occupies residues 16-36 (WMIDNVDVAGFLCLLYLGLVW). N52 carries N-linked (GlcNAc...) asparagine glycosylation. 2 consecutive transmembrane segments (helical) span residues 59-79 (VFIM…IVVV) and 110-130 (FWVG…VLLV). Residues 140–144 (HWYHH) carry the HxxHH motif motif. The active-site Nucleophile is the H143. Transmembrane regions (helical) follow at residues 162 to 182 (IFVF…YFAM), 194 to 214 (IAPV…AVTM), and 241 to 261 (GVVM…ESYL).

It belongs to the ELO family.

It localises to the endoplasmic reticulum membrane. It catalyses the reaction an acyl-CoA + malonyl-CoA + H(+) = a 3-oxoacyl-CoA + CO2 + CoA. It functions in the pathway lipid metabolism; fatty acid biosynthesis. Its function is as follows. Involved in the synthesis of fatty acids. Elongates C10 fatty acids to C14. In Trypanosoma brucei brucei (strain 927/4 GUTat10.1), this protein is Fatty acid elongase 2.